The primary structure comprises 341 residues: Methionine import ATP-binding protein MetN 2 (341 aa).

An ABC transporter domain is found at 2 to 241; the sequence is IELKEVVKEY…PQHTVTKRFV (240 aa). 38–45 contributes to the ATP binding site; sequence GFSGAGKS.

It belongs to the ABC transporter superfamily. Methionine importer (TC 3.A.1.24) family. In terms of assembly, the complex is composed of two ATP-binding proteins (MetN), two transmembrane proteins (MetI) and a solute-binding protein (MetQ).

It localises to the cell membrane. The enzyme catalyses L-methionine(out) + ATP + H2O = L-methionine(in) + ADP + phosphate + H(+). It carries out the reaction D-methionine(out) + ATP + H2O = D-methionine(in) + ADP + phosphate + H(+). Its function is as follows. Part of the ABC transporter complex MetNIQ involved in methionine import. Responsible for energy coupling to the transport system. This is Methionine import ATP-binding protein MetN 2 from Staphylococcus aureus (strain bovine RF122 / ET3-1).